The sequence spans 92 residues: Large ribosomal subunit protein bL28 (92 aa).

It belongs to the bacterial ribosomal protein bL28 family.

This is Large ribosomal subunit protein bL28 from Borreliella afzelii (strain PKo) (Borrelia afzelii).